Here is a 71-residue protein sequence, read N- to C-terminus: Biotinylated protein TB7.3 (71 aa).

The Biotinyl-binding domain maps to 2-71; sequence AEDVRAEIVA…QAGDLIAVIS (70 aa). Lys-37 bears the N6-biotinyllysine mark.

The chain is Biotinylated protein TB7.3 from Mycobacterium bovis (strain ATCC BAA-935 / AF2122/97).